The chain runs to 240 residues: Citrate synthase-lysine N-methyltransferase CSKMT, mitochondrial (240 aa).

Residues Met-1–Phe-21 constitute a mitochondrion transit peptide.

It belongs to the methyltransferase superfamily.

It localises to the mitochondrion. The enzyme catalyses L-lysyl-[citrate synthase] + S-adenosyl-L-methionine = N(6)-methyl-L-lysyl-[citrate synthase] + S-adenosyl-L-homocysteine + H(+). It carries out the reaction N(6)-methyl-L-lysyl-[citrate synthase] + S-adenosyl-L-methionine = N(6),N(6)-dimethyl-L-lysyl-[citrate synthase] + S-adenosyl-L-homocysteine + H(+). The catalysed reaction is N(6),N(6)-dimethyl-L-lysyl-[citrate synthase] + S-adenosyl-L-methionine = N(6),N(6),N(6)-trimethyl-L-lysyl-[citrate synthase] + S-adenosyl-L-homocysteine + H(+). Its activity is regulated as follows. Citrate synthase-lysine methyltransferase activity is inhibited by S-adenosylhomocysteine (AdoHcy) and oxaloacetate (OAA). Protein-lysine methyltransferase that selectively trimethylates citrate synthase (CS) in mitochondria. Seems to conduct trimethylation in a highly distributive manner rather than in a processive manner, and thus introduces a single methyl group per binding event. This chain is Citrate synthase-lysine N-methyltransferase CSKMT, mitochondrial, found in Pongo abelii (Sumatran orangutan).